Consider the following 123-residue polypeptide: Large ribosomal subunit protein uL14 (123 aa).

Belongs to the universal ribosomal protein uL14 family. In terms of assembly, part of the 50S ribosomal subunit. Forms a cluster with proteins L3 and L19. In the 70S ribosome, L14 and L19 interact and together make contacts with the 16S rRNA in bridges B5 and B8.

Binds to 23S rRNA. Forms part of two intersubunit bridges in the 70S ribosome. In Cronobacter sakazakii (strain ATCC BAA-894) (Enterobacter sakazakii), this protein is Large ribosomal subunit protein uL14.